Consider the following 606-residue polypeptide: Putative auxin response factor 21 (606 aa).

Residues 126 to 228 (FTKVLTASDT…ELRVGIRRAR (103 aa)) constitute a DNA-binding region (TF-B3). Residues 511–592 (RTCTKVQMQG…MVKKILIYSK (82 aa)) enclose the PB1 domain.

It belongs to the ARF family. Homodimers and heterodimers.

It is found in the nucleus. Functionally, auxin response factors (ARFs) are transcriptional factors that bind specifically to the DNA sequence 5'-TGTCTC-3' found in the auxin-responsive promoter elements (AuxREs). Could act as transcriptional activator or repressor. Formation of heterodimers with Aux/IAA proteins may alter their ability to modulate early auxin response genes expression. The chain is Putative auxin response factor 21 (ARF21) from Arabidopsis thaliana (Mouse-ear cress).